We begin with the raw amino-acid sequence, 438 residues long: Coenzyme A disulfide reductase (438 aa).

Residue 8–33 (GAVAGGATCASQIRRLDKESDIIIFE) coordinates FAD. Substrate-binding residues include Thr15, Gln19, Arg22, Ser39, and Asn42. The active-site Nucleophile is Cys43. Cys43 functions as the Redox-active in the catalytic mechanism. Lys71 lines the substrate pocket. 151–166 (VLVVGAGYVSLEVLEN) provides a ligand contact to NADP(+). FAD is bound at residue 267 to 277 (TNVPNIYAIGD). His299 is a binding site for substrate. Tyr419 serves as a coordination point for FAD. Lys427 is a substrate binding site.

The protein belongs to the class-III pyridine nucleotide-disulfide oxidoreductase family. In terms of assembly, homodimer. FAD serves as cofactor.

The enzyme catalyses NADP(+) + 2 CoA = CoA-disulfide + NADPH + H(+). Its function is as follows. Catalyzes specifically the NADPH-dependent reduction of coenzyme A disulfide. The polypeptide is Coenzyme A disulfide reductase (Staphylococcus aureus (strain bovine RF122 / ET3-1)).